The sequence spans 176 residues: Inorganic pyrophosphatase (176 aa).

Residues K30, R44, and Y56 each coordinate substrate. Mg(2+) contacts are provided by D66, D71, and D103. Position 142 (Y142) interacts with substrate.

The protein belongs to the PPase family. In terms of assembly, homohexamer. Requires Mg(2+) as cofactor.

It localises to the cytoplasm. It carries out the reaction diphosphate + H2O = 2 phosphate + H(+). Catalyzes the hydrolysis of inorganic pyrophosphate (PPi) forming two phosphate ions. This chain is Inorganic pyrophosphatase, found in Vibrio parahaemolyticus serotype O3:K6 (strain RIMD 2210633).